The following is a 336-amino-acid chain: Adenylate isopentenyltransferase 3, chloroplastic (336 aa).

Residues 1–55 constitute a chloroplast transit peptide; that stretch reads MIMKISMAMCKQPLPPSPTLDFPPARFGPNMLTLNPYGPKDKVVVIMGATGTGKS. 48–55 serves as a coordination point for ATP; it reads GATGTGKS. At cysteine 333 the chain carries Cysteine methyl ester. Cysteine 333 carries S-farnesyl cysteine lipidation. Positions 334–336 are cleaved as a propeptide — removed in mature form; it reads LVA.

The protein belongs to the IPP transferase family. Post-translationally, farnesylated. Expressed the phloem companion cells.

It is found in the plastid. It localises to the chloroplast. The protein resides in the nucleus membrane. The protein localises to the cytoplasm. It carries out the reaction dimethylallyl diphosphate + ADP = N(6)-(dimethylallyl)adenosine 5'-diphosphate + diphosphate. It catalyses the reaction dimethylallyl diphosphate + ATP = N(6)-(dimethylallyl)adenosine 5'-triphosphate + diphosphate. Involved in cytokinin biosynthesis. Catalyzes the transfer of an isopentenyl group from dimethylallyl diphosphate (DMAPP) to ATP and ADP. This is Adenylate isopentenyltransferase 3, chloroplastic (IPT3) from Arabidopsis thaliana (Mouse-ear cress).